A 173-amino-acid polypeptide reads, in one-letter code: Copper transport protein ctr5 (173 aa).

Residues 1–54 (MSLSKMSMSGMSGMGMGSSSNSSAATCRMSMLWNWYIHDSCFLAKSWHINTGNK) lie on the Extracellular side of the membrane. The chain crosses the membrane as a helical span at residues 55–75 (FAGSIIGIFFFAVAIEGLSLV). The Cytoplasmic portion of the chain corresponds to 76-135 (QRMFDRWIVAHSNGKTLSGPLRIFFPSSTVHVTVWQQLIRAAMYSSFYLSATILMLIVMS). The helical transmembrane segment at 136–156 (FNGYAILFGFVGAWIGFFLFA) threads the bilayer. The Extracellular segment spans residues 157 to 173 (SDTYGTPSTGTGCCESR).

It belongs to the copper transporter (Ctr) (TC 1.A.56) family. SLC31A subfamily. In terms of assembly, interacts with ctr4.

It localises to the membrane. In terms of biological role, required for high affinity copper (probably reduced Cu I) transport into the cell. The polypeptide is Copper transport protein ctr5 (ctr5) (Schizosaccharomyces pombe (strain 972 / ATCC 24843) (Fission yeast)).